Reading from the N-terminus, the 390-residue chain is Ribonuclease D (390 aa).

The 3'-5' exonuclease domain maps to 7–173 (ITDSATLAAL…TLFPMLLKEL (167 aa)). Positions 212–293 (KADILGRLKA…ENAEALRPEE (82 aa)) constitute an HRDC domain.

The protein belongs to the RNase D family. The cofactor is a divalent metal cation.

Its subcellular location is the cytoplasm. The catalysed reaction is Exonucleolytic cleavage that removes extra residues from the 3'-terminus of tRNA to produce 5'-mononucleotides.. Exonuclease involved in the 3' processing of various precursor tRNAs. Initiates hydrolysis at the 3'-terminus of an RNA molecule and releases 5'-mononucleotides. The protein is Ribonuclease D of Zymomonas mobilis subsp. mobilis (strain ATCC 31821 / ZM4 / CP4).